The sequence spans 117 residues: V-type proton ATPase subunit G (117 aa).

Belongs to the V-ATPase G subunit family. V-ATPase is a heteromultimeric enzyme made up of two complexes: the ATP-hydrolytic V1 complex and the proton translocation V0 complex. The V1 complex consists of three catalytic AB heterodimers that form a heterohexamer, three peripheral stalks each consisting of EG heterodimers, one central rotor including subunits D and F, and the regulatory subunits C and H. The proton translocation complex V0 consists of the proton transport subunit a, a ring of proteolipid subunits c9c'', rotary subunit d, subunits e and f, and the accessory subunits VhaAC45 and ATP6AP2.

Its function is as follows. Subunit of the V1 complex of vacuolar(H+)-ATPase (V-ATPase), a multisubunit enzyme composed of a peripheral complex (V1) that hydrolyzes ATP and a membrane integral complex (V0) that translocates protons. V-ATPase is responsible for acidifying and maintaining the pH of intracellular compartments and in some cell types, is targeted to the plasma membrane, where it is responsible for acidifying the extracellular environment. In enterocytes, acts as part of a pHCl-2 sensory pathway which mediates Tor-dependent larval growth and metabolism in response to zinc availability. Likely acts in maintaining enterocyte lysosomal acidification which consequently promotes Tor activation at the lysosome membrane. In Drosophila melanogaster (Fruit fly), this protein is V-type proton ATPase subunit G (Vha13).